Reading from the N-terminus, the 54-residue chain is Ribulose bisphosphate carboxylase large chain (54 aa).

The propeptide occupies Met-1–Ser-2. At Pro-3 the chain carries N-acetylproline. Lys-14 carries the post-translational modification N6,N6,N6-trimethyllysine.

It belongs to the RuBisCO large chain family. Type I subfamily. As to quaternary structure, heterohexadecamer of 8 large chains and 8 small chains.

It is found in the plastid. It localises to the chloroplast. The catalysed reaction is 2 (2R)-3-phosphoglycerate + 2 H(+) = D-ribulose 1,5-bisphosphate + CO2 + H2O. It carries out the reaction D-ribulose 1,5-bisphosphate + O2 = 2-phosphoglycolate + (2R)-3-phosphoglycerate + 2 H(+). In terms of biological role, ruBisCO catalyzes two reactions: the carboxylation of D-ribulose 1,5-bisphosphate, the primary event in carbon dioxide fixation, as well as the oxidative fragmentation of the pentose substrate in the photorespiration process. Both reactions occur simultaneously and in competition at the same active site. The protein is Ribulose bisphosphate carboxylase large chain (rbcL) of Colletia hystrix (Crucifixion thorn).